We begin with the raw amino-acid sequence, 284 residues long: Bifunctional protein FolD (284 aa).

Residues 166 to 168 (GAS) and I232 contribute to the NADP(+) site.

It belongs to the tetrahydrofolate dehydrogenase/cyclohydrolase family. Homodimer.

The enzyme catalyses (6R)-5,10-methylene-5,6,7,8-tetrahydrofolate + NADP(+) = (6R)-5,10-methenyltetrahydrofolate + NADPH. It catalyses the reaction (6R)-5,10-methenyltetrahydrofolate + H2O = (6R)-10-formyltetrahydrofolate + H(+). Its pathway is one-carbon metabolism; tetrahydrofolate interconversion. In terms of biological role, catalyzes the oxidation of 5,10-methylenetetrahydrofolate to 5,10-methenyltetrahydrofolate and then the hydrolysis of 5,10-methenyltetrahydrofolate to 10-formyltetrahydrofolate. The sequence is that of Bifunctional protein FolD from Tolumonas auensis (strain DSM 9187 / NBRC 110442 / TA 4).